The chain runs to 341 residues: tRNA N6-adenosine threonylcarbamoyltransferase (341 aa).

Residues His115 and His119 each contribute to the Fe cation site. Substrate contacts are provided by residues 137–141 (IVSGG), Asp170, Gly183, Asp187, and Asn276. A Fe cation-binding site is contributed by Asp304.

The protein belongs to the KAE1 / TsaD family. Requires Fe(2+) as cofactor.

It localises to the cytoplasm. The enzyme catalyses L-threonylcarbamoyladenylate + adenosine(37) in tRNA = N(6)-L-threonylcarbamoyladenosine(37) in tRNA + AMP + H(+). In terms of biological role, required for the formation of a threonylcarbamoyl group on adenosine at position 37 (t(6)A37) in tRNAs that read codons beginning with adenine. Is involved in the transfer of the threonylcarbamoyl moiety of threonylcarbamoyl-AMP (TC-AMP) to the N6 group of A37, together with TsaE and TsaB. TsaD likely plays a direct catalytic role in this reaction. The protein is tRNA N6-adenosine threonylcarbamoyltransferase of Staphylococcus aureus (strain Mu3 / ATCC 700698).